A 233-amino-acid chain; its full sequence is Cobalt-containing nitrile hydratase subunit beta (233 aa).

It belongs to the nitrile hydratase subunit beta family. In terms of assembly, heterotetramer of two alpha and two beta chains.

It carries out the reaction an aliphatic primary amide = an aliphatic nitrile + H2O. NHase catalyzes the hydration of various nitrile compounds to the corresponding amides. The chain is Cobalt-containing nitrile hydratase subunit beta from Pseudonocardia thermophila.